The following is a 623-amino-acid chain: DNA polymerase alpha subunit B (623 aa).

The tract at residues 113–151 (IPKIKDEPSSSVDVSTARNKNNHNNNNNNNPSLPNKSMF) is disordered. Positions 121 to 130 (SSSVDVSTAR) are enriched in polar residues.

It belongs to the DNA polymerase alpha subunit B family. In terms of assembly, DNA polymerase alpha:primase is a four subunit enzyme complex, which is assembled throughout the cell cycle, and consists of the two DNA polymerase subunits A and B, and the DNA primase large and small subunits. Subunit B binds to subunit A.

The protein resides in the nucleus. Functionally, may play an essential role at the early stage of chromosomal DNA replication by coupling the polymerase alpha/primase complex to the cellular replication machinery. In Dictyostelium discoideum (Social amoeba), this protein is DNA polymerase alpha subunit B (polA2).